The following is a 256-amino-acid chain: F-actin-capping protein subunit alpha (256 aa).

Ser-31 bears the Phosphoserine mark.

It belongs to the F-actin-capping protein alpha subunit family. As to quaternary structure, component of the F-actin capping complex, composed of a heterodimer of an alpha and a beta subunit.

It localises to the cytoplasm. The protein resides in the cytoskeleton. Its subcellular location is the actin patch. In terms of biological role, F-actin-capping proteins bind in a Ca(2+)-independent manner to the fast growing ends of actin filaments (barbed end) thereby blocking the exchange of subunits at these ends. Unlike other capping proteins (such as gelsolin and severin), these proteins do not sever actin filaments. Competes with formin cdc12 for attachment to the actin filaments barbed ends. Slowly replaces cdc12 on the barbed ends in preparation for filament disassembly during contractile ring constriction. The chain is F-actin-capping protein subunit alpha (acp1) from Schizosaccharomyces pombe (strain 972 / ATCC 24843) (Fission yeast).